A 278-amino-acid polypeptide reads, in one-letter code: Imidazole glycerol phosphate synthase subunit HisF (278 aa).

Residues D11 and D130 contribute to the active site.

This sequence belongs to the HisA/HisF family. In terms of assembly, heterodimer of HisH and HisF.

It localises to the cytoplasm. It carries out the reaction 5-[(5-phospho-1-deoxy-D-ribulos-1-ylimino)methylamino]-1-(5-phospho-beta-D-ribosyl)imidazole-4-carboxamide + L-glutamine = D-erythro-1-(imidazol-4-yl)glycerol 3-phosphate + 5-amino-1-(5-phospho-beta-D-ribosyl)imidazole-4-carboxamide + L-glutamate + H(+). Its pathway is amino-acid biosynthesis; L-histidine biosynthesis; L-histidine from 5-phospho-alpha-D-ribose 1-diphosphate: step 5/9. In terms of biological role, IGPS catalyzes the conversion of PRFAR and glutamine to IGP, AICAR and glutamate. The HisF subunit catalyzes the cyclization activity that produces IGP and AICAR from PRFAR using the ammonia provided by the HisH subunit. The chain is Imidazole glycerol phosphate synthase subunit HisF from Thermodesulfovibrio yellowstonii (strain ATCC 51303 / DSM 11347 / YP87).